Here is a 242-residue protein sequence, read N- to C-terminus: DNA repair protein RecO (242 aa).

The protein belongs to the RecO family.

Functionally, involved in DNA repair and RecF pathway recombination. In Nitrosospira multiformis (strain ATCC 25196 / NCIMB 11849 / C 71), this protein is DNA repair protein RecO.